A 160-amino-acid chain; its full sequence is Complexin-4 (160 aa).

Positions 14-44 are disordered; that stretch reads KNLGFGGGSEEKKEEGGTSDPAAAKGMTREE. Cysteine methyl ester is present on Cys-157. Residue Cys-157 is the site of S-farnesyl cysteine attachment. The propeptide at 158–160 is removed in mature form; sequence SVM.

This sequence belongs to the complexin/synaphin family. As to quaternary structure, weakly binds to the SNARE core complex containing SNAP25, VAMP2 and STX1A. Post-translationally, farnesylation mediates presynaptic targeting and is important for function in neurotransmitter release. As to expression, present specifically in the retina (at protein level). Expressed in the outer nuclear layer of the retina (at protein level). Strongly expressed at rod photoreceptor ribbon synapses (at protein level). Not expressed at conventional amacrine cell synapses, nor at cone photoreceptor ribbon synapses (at protein level). Weakly expressed at cone photoreceptor synaptic terminals (at protein level). Not expressed in the brain (at protein level).

It is found in the synapse. Its subcellular location is the cell membrane. Complexin that regulates SNARE protein complex-mediated synaptic vesicle fusion. Required for the maintenance of synaptic ultrastructure in the adult retina. Positively regulates synaptic transmission through synaptic vesicle availability and exocytosis of neurotransmitters at photoreceptor ribbon synapses in the retina. Suppresses tonic photoreceptor activity and baseline 'noise' by suppression of Ca(2+) vesicle tonic release and the facilitation of evoked synchronous and asynchronous Ca(2+) vesicle release. The sequence is that of Complexin-4 (Cplx4) from Mus musculus (Mouse).